Consider the following 403-residue polypeptide: Tryptophan synthase beta chain 1 (403 aa).

Lysine 96 carries the N6-(pyridoxal phosphate)lysine modification.

This sequence belongs to the TrpB family. As to quaternary structure, tetramer of two alpha and two beta chains. Pyridoxal 5'-phosphate is required as a cofactor.

It carries out the reaction (1S,2R)-1-C-(indol-3-yl)glycerol 3-phosphate + L-serine = D-glyceraldehyde 3-phosphate + L-tryptophan + H2O. It participates in amino-acid biosynthesis; L-tryptophan biosynthesis; L-tryptophan from chorismate: step 5/5. The beta subunit is responsible for the synthesis of L-tryptophan from indole and L-serine. The polypeptide is Tryptophan synthase beta chain 1 (trpB1) (Wolinella succinogenes (strain ATCC 29543 / DSM 1740 / CCUG 13145 / JCM 31913 / LMG 7466 / NCTC 11488 / FDC 602W) (Vibrio succinogenes)).